We begin with the raw amino-acid sequence, 353 residues long: 2-Hydroxyacid oxidase 2 (353 aa).

Residues 2 to 353 enclose the FMN hydroxy acid dehydrogenase domain; sequence PLVCLADFKA…SPDLIQFSRL (352 aa). FMN-binding positions include 77 to 79, Ser106, and Gln128; that span reads PTA. Residue Tyr130 participates in a 2-oxocarboxylate binding. Phosphoserine is present on Ser133. Residue Thr156 participates in FMN binding. Residue Arg165 coordinates a 2-oxocarboxylate. Residue Lys224 participates in FMN binding. His248 acts as the Proton acceptor in catalysis. Residue Arg251 coordinates a 2-oxocarboxylate. FMN is bound by residues 279 to 283 and 302 to 303; these read DGGVR and GR. Positions 351–353 match the Microbody targeting signal motif; the sequence is SRL.

The protein belongs to the FMN-dependent alpha-hydroxy acid dehydrogenase family. In terms of assembly, homotetramer. Could also form homooctamer. Requires FMN as cofactor. In terms of tissue distribution, expressed in kidney.

Its subcellular location is the peroxisome. It carries out the reaction a (2S)-2-hydroxycarboxylate + O2 = a 2-oxocarboxylate + H2O2. The catalysed reaction is 2-hydroxyoctanoate + O2 = 2-oxooctanoate + H2O2. It catalyses the reaction 2-hydroxyhexadecanoate + O2 = 2-oxohexadecanoate + H2O2. The enzyme catalyses 2-hydroxyhexanoate + O2 = 2-oxohexanoate + H2O2. It carries out the reaction mandelate + O2 = phenylglyoxylate + H2O2. Is inhibited in vitro by CCPST (4-carboxy-5-(4-chlorophenyl)sulfanyl-1,2,3-thiadiazole). Its function is as follows. Oxidase that catalyzes the oxidation of medium and long chain hydroxyacids such as 2-hydroxyhexadecanoate, 2-hydroxyoctanoate, 2-hydroxyhexanoate and 2-hydroxybutanoate, to the correspondong 2-oxoacids. Its role in the oxidation of 2-hydroxy fatty acids may contribute to the general pathway of fatty acid alpha-oxidation. Can also use mandelate as substrate. Active in vitro with the artificial electron acceptor 2,6-dichlorophenolindophenol (DCIP), but O2 is believed to be the physiological electron acceptor, leading to the production of H2O2. The polypeptide is 2-Hydroxyacid oxidase 2 (Hao2) (Rattus norvegicus (Rat)).